We begin with the raw amino-acid sequence, 742 residues long: Clamp-binding protein CrfC (742 aa).

Residues 41–45 (QLALP) form a clamp-binding consensus region. Positions 66–402 (SRLEMVLAIV…LWEDSLFAQP (337 aa)) constitute a Dynamin-type G domain. The tract at residues 76–83 (GTMKAGKS) is G1 motif. The interval 102–104 (MTA) is G2 motif. The tract at residues 236–239 (DTPG) is G3 motif. Residues 297-300 (NKFD) are G4 motif. The segment at 331-334 (FPVS) is G5 motif. Residues 440 to 472 (RAHGLNVACEQLRQNIHQIEESLQLLQLNQAQV) adopt a coiled-coil conformation.

It belongs to the TRAFAC class dynamin-like GTPase superfamily. Dynamin/Fzo/YdjA family. In terms of assembly, forms homooligomers. Binds to the beta sliding clamp processivity factor (DnaN) in the presence and absence of DNA, may bind to the clamp itself as homodimers or trimers. Homooligomers may be able to bind more than 1 clamp complex.

It is found in the cytoplasm. Its function is as follows. Important for the colocalization of sister nascent DNA strands after replication fork passage during DNA replication, and for positioning and subsequent partitioning of sister chromosomes. Does not have GTPase activity on its own. The sequence is that of Clamp-binding protein CrfC (crfC) from Escherichia coli (strain K12).